The sequence spans 548 residues: (S)-beta-macrocarpene synthase (548 aa).

Residues aspartate 302 and aspartate 306 each contribute to the Mg(2+) site. Substrate contacts are provided by aspartate 302, aspartate 306, arginine 443, and asparagine 446. Positions 302 to 306 (DDTLD) match the DDXXD motif motif. 3 residues coordinate Mg(2+): asparagine 446, serine 450, and glutamate 454.

The protein belongs to the terpene synthase family. Monomer. The cofactor is Mg(2+). Requires Mn(2+) as cofactor. In terms of tissue distribution, expressed in roots. Not detected in leaves, unless damaged by herbivory or infected by fungi.

It is found in the cytoplasm. It carries out the reaction (S)-beta-bisabolene = (S)-beta-macrocarpene. The enzyme catalyses (2E,6E)-farnesyl diphosphate = (S)-beta-bisabolene + diphosphate. It catalyses the reaction (2E)-geranyl diphosphate = (4S)-limonene + diphosphate. The catalysed reaction is (2E)-geranyl diphosphate = beta-myrcene + diphosphate. It carries out the reaction (2E)-geranyl diphosphate = terpinolene + diphosphate. The enzyme catalyses (2E)-geranyl diphosphate + H2O = (S)-linalool + diphosphate. Its pathway is secondary metabolite biosynthesis; terpenoid biosynthesis. Involved in the biosynthesis of the bicyclic sesquiterpene (S)-beta-macrocarpene. Can use both geranyl diphosphate and farnesyl diphosphate as substrate, but not geranylgeranyl diphosphate. Produces mainly (S)-beta-macrocarpene, but also smaller amounts of beta-bisabolene and (E)-beta-farnesene when used with farnesyl diphosphate as substrate. In the presence of geranyl diphosphate, produces the acyclic monoterpenes beta-myrcene and linalool along with minor amounts of the cyclic compounds limonene, alpha-thujene, sabinene and alpha-terpinolene. May be involved in plant defense. The protein is (S)-beta-macrocarpene synthase of Zea mays (Maize).